The following is a 152-amino-acid chain: Ribonuclease H (152 aa).

An RNase H type-1 domain is found at 4-145; that stretch reads SRSMVEIFSD…CDELARQAIA (142 aa). Mg(2+)-binding residues include Asp13, Glu51, Asp73, and Asp137.

Belongs to the RNase H family. Monomer. It depends on Mg(2+) as a cofactor.

It is found in the cytoplasm. It catalyses the reaction Endonucleolytic cleavage to 5'-phosphomonoester.. Its function is as follows. Endonuclease that specifically degrades the RNA of RNA-DNA hybrids. The chain is Ribonuclease H from Syntrophotalea carbinolica (strain DSM 2380 / NBRC 103641 / GraBd1) (Pelobacter carbinolicus).